A 101-amino-acid polypeptide reads, in one-letter code: Urease subunit beta (101 aa).

The protein belongs to the urease beta subunit family. Heterotrimer of UreA (gamma), UreB (beta) and UreC (alpha) subunits. Three heterotrimers associate to form the active enzyme.

It localises to the cytoplasm. The catalysed reaction is urea + 2 H2O + H(+) = hydrogencarbonate + 2 NH4(+). The protein operates within nitrogen metabolism; urea degradation; CO(2) and NH(3) from urea (urease route): step 1/1. The protein is Urease subunit beta of Paraburkholderia phytofirmans (strain DSM 17436 / LMG 22146 / PsJN) (Burkholderia phytofirmans).